Here is a 22-residue protein sequence, read N- to C-terminus: MHNSIAYDKDGNSTGQKYYAYG.

A disordered region spans residues Met1–Gly22.

This is an uncharacterized protein from Lactobacillus helveticus (Lactobacillus suntoryeus).